We begin with the raw amino-acid sequence, 326 residues long: L-Ala--D-Glu endopeptidase (326 aa).

A signal peptide spans Met-1–Ala-19. Positions 204, 208, 292, and 294 each coordinate Zn(2+).

The protein belongs to the peptidase M23B family. Requires Zn(2+) as cofactor.

In terms of biological role, L-Ala--D-Glu endopeptidase involved in production of single L-alanine side chains from tetrapeptides in the spore cortex peptidoglycan. Therefore, is required for the endospore cortex maturation. In Bacillus subtilis (strain 168), this protein is L-Ala--D-Glu endopeptidase (lytH).